We begin with the raw amino-acid sequence, 185 residues long: Ribosome maturation factor RimM (185 aa).

A PRC barrel domain is found at 92–168; the sequence is DDDTFYHADL…GRRVVVAEAF (77 aa).

This sequence belongs to the RimM family. As to quaternary structure, binds ribosomal protein uS19.

The protein localises to the cytoplasm. Its function is as follows. An accessory protein needed during the final step in the assembly of 30S ribosomal subunit, possibly for assembly of the head region. Essential for efficient processing of 16S rRNA. May be needed both before and after RbfA during the maturation of 16S rRNA. It has affinity for free ribosomal 30S subunits but not for 70S ribosomes. The chain is Ribosome maturation factor RimM from Xanthobacter autotrophicus (strain ATCC BAA-1158 / Py2).